The following is a 194-amino-acid chain: Large ribosomal subunit protein bL25 (194 aa).

The protein belongs to the bacterial ribosomal protein bL25 family. CTC subfamily. As to quaternary structure, part of the 50S ribosomal subunit; part of the 5S rRNA/L5/L18/L25 subcomplex. Contacts the 5S rRNA. Binds to the 5S rRNA independently of L5 and L18.

Its function is as follows. This is one of the proteins that binds to the 5S RNA in the ribosome where it forms part of the central protuberance. This chain is Large ribosomal subunit protein bL25, found in Neorickettsia sennetsu (strain ATCC VR-367 / Miyayama) (Ehrlichia sennetsu).